The primary structure comprises 757 residues: Catalase-peroxidase 2 (757 aa).

Residues 1–26 form the signal peptide; it reads MKHPLFNQKVLAGFVSMLLISGSAFA. Positions 126–248 form a cross-link, tryptophyl-tyrosyl-methioninium (Trp-Tyr) (with M-274); the sequence is WHSAGTYRTL…LGATHMGLIY (123 aa). Residue H127 is the Proton acceptor of the active site. Residues 248–274 constitute a cross-link (tryptophyl-tyrosyl-methioninium (Tyr-Met) (with W-126)); sequence YVNPEGPKGVPDPLGSAKNIRVAFERM. Heme b is bound at residue H289.

It belongs to the peroxidase family. Peroxidase/catalase subfamily. Homodimer or homotetramer. It depends on heme b as a cofactor. In terms of processing, formation of the three residue Trp-Tyr-Met cross-link is important for the catalase, but not the peroxidase activity of the enzyme.

The catalysed reaction is H2O2 + AH2 = A + 2 H2O. It catalyses the reaction 2 H2O2 = O2 + 2 H2O. Bifunctional enzyme with both catalase and broad-spectrum peroxidase activity. In Shewanella frigidimarina (strain NCIMB 400), this protein is Catalase-peroxidase 2.